The following is a 935-amino-acid chain: Potassium channel AKT1 (935 aa).

The Cytoplasmic segment spans residues 1–106 (MARWGAARMA…YDRRYRIWET (106 aa)). The chain crosses the membrane as a helical span at residues 107–127 (FLIVLVVYSAWVSPFEFGFIP). Residues 128-136 (KPTGALATA) lie on the Extracellular side of the membrane. Residues 137–157 (DNVVNAFFAVDIILTFFVAYL) form a helical membrane-spanning segment. Over 158–178 (DKMSYMLEDDPKKIAWRYSTT) the chain is Cytoplasmic. Residues 179–199 (WLVLDVASTIPSEFARRILPS) traverse the membrane as a helical segment. Topologically, residues 200–205 (KLRSYG) are extracellular. The chain crosses the membrane as a helical; Voltage-sensor span at residues 206-226 (FFNMLRLWRLRRVSSLFSRLE). Residues 227-240 (KDRHFNYFWVRCAK) are Cytoplasmic-facing. The helical transmembrane segment at 241–261 (LICVTLFAVHCAACFYYLLAD) threads the bilayer. Over 262–288 (RYPVPTSTWIGNYMADFHERSLWIRYV) the chain is Extracellular. The segment at residues 289-308 (TSVYWSITTLTTVGYGDLHA) is an intramembrane region (pore-forming). Over 309 to 312 (ENTR) the chain is Extracellular. The chain crosses the membrane as a helical span at residues 313-333 (EMIFNIFYMLFNLGLTAYLIG). At 334-935 (NMTNLVVHGT…WDAEKMKGKS (602 aa)) the chain is on the cytoplasmic side. 419–538 (LFQGVSNDLI…TIIMNNLIQF (120 aa)) contributes to the a nucleoside 3',5'-cyclic phosphate binding site. 6 ANK repeats span residues 565–594 (DLPITLCFAVTRGDDFLLHQLLKRGMDPNE), 598–627 (DGHTALHIAASKGNEQCVRLLLEYGADPNA), 631–660 (EGKVPLWEALCEKHAAVVQLLVEGGADLSS), 662–691 (DTGLYACIAVEESDTELLNDIIHYGGDVNR), 695–724 (DGTTALHRAVCDGNVQMAELLLEHGADIDK), and 728–757 (NGWTPRALAEQQGHDDIQLLFRSRKAATAS). Positions 826–854 (SQAQRETDHPLSRGGLAATGSPNPSSGSR) are disordered. Polar residues predominate over residues 845–854 (GSPNPSSGSR). The KHA domain occupies 859–935 (RVTISCPEKG…WDAEKMKGKS (77 aa)).

This sequence belongs to the potassium channel family. Plant (TC 1.A.1.4) subfamily. The potassium channel is probably a homo- or heterotetrameric complex of pore-forming subunits. Expressed in roots and coleoptile of young seedlings.

The protein resides in the membrane. Its function is as follows. Highly selective inward-rectifying potassium channel that mediates potassium uptake by plant roots. Assuming opened or closed conformations in response to the voltage difference across the membrane, the channel is activated by hyperpolarization. May be a major salt-sensitive potassium channel in roots. This is Potassium channel AKT1 (AKT1) from Oryza sativa subsp. japonica (Rice).